A 113-amino-acid polypeptide reads, in one-letter code: Non-structural protein 1 (113 aa).

It belongs to the pneumovirus non-structural protein 1 family.

It is found in the host cytoplasm. The protein localises to the host mitochondrion. In terms of biological role, may play a minor role in antagonizing the type I IFN-mediated antiviral response. Additionally, NS1 may serve some inhibitory role in viral transcription and RNA replication. The polypeptide is Non-structural protein 1 (1C) (Mus musculus (Mouse)).